A 207-amino-acid polypeptide reads, in one-letter code: Large ribosomal subunit protein uL4 (207 aa).

The protein belongs to the universal ribosomal protein uL4 family. Part of the 50S ribosomal subunit.

One of the primary rRNA binding proteins, this protein initially binds near the 5'-end of the 23S rRNA. It is important during the early stages of 50S assembly. It makes multiple contacts with different domains of the 23S rRNA in the assembled 50S subunit and ribosome. Functionally, forms part of the polypeptide exit tunnel. The protein is Large ribosomal subunit protein uL4 of Rickettsia peacockii (strain Rustic).